The sequence spans 552 residues: CTP synthase (552 aa).

Residues 1–270 are amidoligase domain; that stretch reads MTKFVFVTGG…DGLICDKLRL (270 aa). A CTP-binding site is contributed by serine 13. Position 13 (serine 13) interacts with UTP. ATP-binding positions include 14-19 and aspartate 71; that span reads SLGKGI. Residues aspartate 71 and glutamate 144 each contribute to the Mg(2+) site. Residues 151 to 153, 191 to 196, and lysine 227 each bind CTP; these read DIE and KTKPTQ. UTP-binding positions include 191–196 and lysine 227; that span reads KTKPTQ. Residues 295 to 548 enclose the Glutamine amidotransferase type-1 domain; it reads QIAMVGKYVE…IKAAVEHQKP (254 aa). Glycine 357 provides a ligand contact to L-glutamine. Cysteine 384 acts as the Nucleophile; for glutamine hydrolysis in catalysis. Residues 385–388 and glutamate 408 contribute to the L-glutamine site; that span reads LGMQ. The segment at 432-451 is disordered; it reads KTRSENSDLGGTMRLGAQSS. Position 474 (arginine 474) interacts with L-glutamine. Residues histidine 521 and glutamate 523 contribute to the active site.

Belongs to the CTP synthase family. Homotetramer.

The enzyme catalyses UTP + L-glutamine + ATP + H2O = CTP + L-glutamate + ADP + phosphate + 2 H(+). The catalysed reaction is L-glutamine + H2O = L-glutamate + NH4(+). It catalyses the reaction UTP + NH4(+) + ATP = CTP + ADP + phosphate + 2 H(+). It participates in pyrimidine metabolism; CTP biosynthesis via de novo pathway; CTP from UDP: step 2/2. Allosterically activated by GTP, when glutamine is the substrate; GTP has no effect on the reaction when ammonia is the substrate. The allosteric effector GTP functions by stabilizing the protein conformation that binds the tetrahedral intermediate(s) formed during glutamine hydrolysis. Inhibited by the product CTP, via allosteric rather than competitive inhibition. Functionally, catalyzes the ATP-dependent amination of UTP to CTP with either L-glutamine or ammonia as the source of nitrogen. Regulates intracellular CTP levels through interactions with the four ribonucleotide triphosphates. This chain is CTP synthase, found in Acidovorax sp. (strain JS42).